A 387-amino-acid chain; its full sequence is Prostatic acid phosphatase (387 aa).

Residues 1–34 form the signal peptide; the sequence is MRNAALLMTRATSLRLSLLLLLSFLPDLDGGVRA. Residue R45 participates in substrate binding. Catalysis depends on H46, which acts as the Nucleophile. Residue R49 coordinates substrate. An N-linked (GlcNAc...) asparagine glycan is attached at N96. Residue R113 participates in substrate binding. 3 cysteine pairs are disulfide-bonded: C163–C374, C217–C315, and C349–C353. Residue N222 is glycosylated (N-linked (GlcNAc...) asparagine). H291 lines the substrate pocket. Residue D292 is the Proton donor of the active site. A glycan (N-linked (GlcNAc...) asparagine) is linked at N335.

The protein belongs to the histidine acid phosphatase family. Homodimer; dimer formation is required for phosphatase activity.

The protein localises to the secreted. It carries out the reaction a phosphate monoester + H2O = an alcohol + phosphate. The catalysed reaction is 1-(9Z-octadecenoyl)-sn-glycero-3-phosphate + H2O = 1-(9Z-octadecenoyl)-sn-glycerol + phosphate. The enzyme catalyses O-phospho-L-tyrosyl-[protein] + H2O = L-tyrosyl-[protein] + phosphate. In terms of biological role, a non-specific tyrosine phosphatase that dephosphorylates a diverse number of substrates under acidic conditions (pH 4-6) including alkyl, aryl, and acyl orthophosphate monoesters and phosphorylated proteins. Has lipid phosphatase activity and inactivates lysophosphatidic acid in seminal plasma. The protein is Prostatic acid phosphatase (ACP3) of Bos taurus (Bovine).